We begin with the raw amino-acid sequence, 321 residues long: MLWSVLRHILWVALLLLVLSLLGFVILLRDPLNANLVTQNIYIGYFHYLGTLLQGDFGITYNGGKSLMNLILTVLPPTLELCFITLFLAFIFGLPLGIISAVNSEQVFAKSLQILSYVGLSIPIFWLAPILLYVAALSHWEIAAIGQYNLLYEIKSITGFPVIDMWFMEVPYRTKIVQNILQHLALPTLVLCILPTMEIIRIIHQRAEYILNQNFSKVATTRGWSKWKILHQYVFRNTFPLLVPQVPRVFTLVLTQCMLVETALGWPGIGRWLINAVNEQDYNSIAAGVIVIGVCIILIDTFTKIFTFILDPFKKKGWYAK.

8 helical membrane passes run histidine 8 to leucine 28, isoleucine 41 to tyrosine 61, cysteine 82 to valine 102, tyrosine 117 to leucine 137, leucine 150 to valine 170, isoleucine 180 to isoleucine 200, valine 249 to isoleucine 269, and valine 289 to isoleucine 309. One can recognise an ABC transmembrane type-1 domain in the interval leucine 75–threonine 303.

This sequence belongs to the binding-protein-dependent transport system permease family. OppBC subfamily.

Its subcellular location is the cell inner membrane. Its function is as follows. Involved in a peptide intake transport system that plays a role in the resistance to antimicrobial peptides. The polypeptide is Peptide transport system permease protein SapB (sapB) (Haemophilus influenzae (strain ATCC 51907 / DSM 11121 / KW20 / Rd)).